The primary structure comprises 1726 residues: Transcription elongation factor SPT6 (1726 aa).

Composition is skewed to acidic residues over residues 1–18 (MSDFIESEAEESEEEFEE), 31–45 (EEDEEEEEENTEDQD), and 55–79 (DDDDVEEEEEEERGEPPAGEDSDSG). Disordered regions lie at residues 1–196 (MSDF…KGKK), 219–248 (AEFDTEAYDHAEEEEEDQDDESWDRPKKQT), and 482–512 (EVSEEDGEEAEVEEEEEEEEQKGPDLKQASR). The residue at position 90 (Ser-90) is a Phosphoserine. Over residues 93–104 (DYLDDDDLDLIE) the composition is skewed to acidic residues. Over residues 110–120 (KVKRRKKKYSR) the composition is skewed to basic residues. Composition is skewed to acidic residues over residues 146–157 (GDGEGEVEDGEA), 166–186 (DEEEEDDEESDIDDFIVDDDG), 219–240 (AEFDTEAYDHAEEEEEDQDDES), and 484–501 (SEEDGEEAEVEEEEEEEE). Positions 502-512 (QKGPDLKQASR) are enriched in basic and acidic residues. Residues 806 to 865 (LKRRNAWREDEREKKQQDVENLKKFLLSKKPHVVAVSGENRDAHMVMEDIKRTISELEQN) adopt a coiled-coil conformation. Residues 1204–1273 (WNHFDSGSCP…EKFNVDLTCR (70 aa)) form the S1 motif domain. Positions 1316–1426 (YIKRVIAHPS…LLGHKYFHEC (111 aa)) constitute an SH2 domain. Position 1522 is a phosphothreonine (Thr-1522). Residue Ser-1525 is modified to Phosphoserine. The segment covering 1611-1627 (LMTPSYSYTTPGQQQAM) has biased composition (polar residues). Residues 1611-1726 (LMTPSYSYTT…ATPLLDEMDR (116 aa)) form a disordered region. 2 stretches are compositionally biased toward low complexity: residues 1628 to 1640 (TTPQYPSSTPQSS) and 1647 to 1656 (SSSTPSSSSS). Positions 1657–1669 (RVRTPQPKASSHT) are enriched in polar residues.

This sequence belongs to the SPT6 family.

The protein localises to the nucleus. Histone H3-H4 chaperone that plays a role in maintenance of chromatin structure during RNA polymerase II transcription elongation. Promotes the activation of the myogenic gene program by entailing erasure of the repressive H3K27me3 epigenetic mark through stabilization of the chromatin interaction of the H3K27 demethylase KDM6A. Plays an important role during early patterning and somitogenesis of the embryo. The protein is Transcription elongation factor SPT6 (supt6h) of Danio rerio (Zebrafish).